A 148-amino-acid chain; its full sequence is Homoprotocatechuate degradative operon repressor (148 aa).

The HTH marR-type domain occupies 2-134 (HDSLTIALLQ…LTHLLEEFIA (133 aa)).

In terms of biological role, repressor for the homoprotocatechuate catabolic pathway hpc operon. The polypeptide is Homoprotocatechuate degradative operon repressor (hpcR) (Escherichia coli).